Consider the following 568-residue polypeptide: Estrogen receptor beta (568 aa).

The segment at 1–177 (MHQQSPVDDV…SLRGKADMHY (177 aa)) is modulating. 2 consecutive NR C4-type zinc fingers follow at residues 178-198 (CAVC…CEGC) and 214-238 (CPAT…LRKC). The segment at residues 178–243 (CAVCSDYASG…RLRKCYEVGM (66 aa)) is a DNA-binding region (nuclear receptor). Positions 300-536 (TPEELIARIM…DLLLEMLDAH (237 aa)) constitute an NR LBD domain.

It belongs to the nuclear hormone receptor family. NR3 subfamily. In terms of assembly, binds DNA as a homodimer. Can form a heterodimer with ER-alpha.

The protein localises to the nucleus. In terms of biological role, binds estrogens with an affinity similar to that of ER-alpha, and activates expression of reporter genes containing estrogen response elements (ERE) in an estrogen-dependent manner. This is Estrogen receptor beta (esr2) from Oncorhynchus mykiss (Rainbow trout).